The chain runs to 33 residues: U1-pseudomyrmecitoxin-Pt1 subunit LS2 (33 aa).

The protein belongs to the myrmexin family. As to quaternary structure, heterodimer composed of subunit LS2 and subunit SS1, heterodimer composed of subunit LS2 and SS2, and heterodimer composed of subunit LS2 and SS3; disulfide-linked. In terms of tissue distribution, expressed by the venom gland.

It localises to the secreted. This heterodimer may have anti-inflammatory properties, since the myrmexin complex (composed of 6 SS-LS heterodimers) inhibits carrageenin-induced edema in a dose-dependent manner (after subcutaneous injection into rats). The protein is U1-pseudomyrmecitoxin-Pt1 subunit LS2 of Pseudomyrmex triplarinus (Ant).